The primary structure comprises 531 residues: Ceramide kinase (531 aa).

An essential for enzyme activity region spans residues 1-115 (MGAMGAAEPL…SADEQLCHLW (115 aa)). A required for binding to sulfatide and phosphoinositides region spans residues 1–125 (MGAMGAAEPL…LQTLRGLLES (125 aa)). Residues 128–278 (SRPKHLLVFI…IDVSSVHYHN (151 aa)) enclose the DAGKc domain. ATP-binding positions include 138 to 140 (NPF) and 170 to 174 (TEHAN). 195–198 (GGDG) provides a ligand contact to substrate. The active-site Proton donor/acceptor is aspartate 197. ATP-binding positions include glutamate 202, 239–241 (GST), arginine 304, and arginine 310. 2 positions are modified to phosphoserine: serine 340 and serine 408. 502-504 (DGE) lines the ATP pocket.

Ca(2+) serves as cofactor. Requires Mg(2+) as cofactor. In terms of tissue distribution, high level expression in heart, brain, testis and pancreas; low expression in spleen, liver and lung; not detected in skeletal muscle.

The protein resides in the cytoplasm. It localises to the cell membrane. The enzyme catalyses an N-acylsphing-4-enine + ATP = an N-acylsphing-4-enine 1-phosphate + ADP + H(+). It catalyses the reaction N-(hexanoyl)sphing-4-enine + ATP = N-hexanoylsphing-4-enine 1-phosphate + ADP + H(+). The catalysed reaction is N-(acetyl)-sphing-4-enine + ATP = N-(acetyl)-sphing-4-enine-1-phosphate + ADP + H(+). It carries out the reaction N-hexadecanoylsphing-4-enine + ATP = N-(hexadecanoyl)-sphing-4-enine-1-phosphate + ADP + H(+). The enzyme catalyses N-hexanoyl-(4R)-hydroxysphinganine + ATP = N-hexanoyl-(4R)-hydroxysphinganine-1-phosphate + ADP + H(+). In terms of biological role, catalyzes specifically the phosphorylation of ceramide to form ceramide 1-phosphate. Acts efficiently on natural and analog ceramides (C6, C8, C16 ceramides, and C8-dihydroceramide), to a lesser extent on C2-ceramide and C6-dihydroceramide, but not on other lipids, such as various sphingosines. Shows a greater preference for D-erythro isomer of ceramides. Binds phosphoinositides. The chain is Ceramide kinase (Cerk) from Mus musculus (Mouse).